We begin with the raw amino-acid sequence, 671 residues long: K(+)-insensitive pyrophosphate-energized proton pump (671 aa).

5 helical membrane passes run Ser3–Ala23, Thr57–Leu77, Ile79–Ser99, Ala128–Leu148, and Val156–Phe176. Lys178 contributes to the substrate binding site. Mg(2+)-binding residues include Asp181, Asp185, Asn208, and Asp211. The next 6 helical transmembrane spans lie at Leu223 to Gly243, Ile249 to Phe269, Gly285 to Met305, Leu310 to Tyr330, Leu366 to Ala386, and Ile391 to Val411. Asp421 serves as a coordination point for Mg(2+). Transmembrane regions (helical) follow at residues Ala452–Asp472, Val490–Met510, Met558–Pro578, and Ala580–Asp600. Ca(2+) is bound by residues Asp607, Asp633, and Asp637. Lys640 lines the substrate pocket. The helical transmembrane segment at Ala646–Ile666 threads the bilayer.

This sequence belongs to the H(+)-translocating pyrophosphatase (TC 3.A.10) family. K(+)-insensitive subfamily. As to quaternary structure, homodimer. The cofactor is Mg(2+).

The protein localises to the cell membrane. It carries out the reaction diphosphate + H2O + H(+)(in) = 2 phosphate + 2 H(+)(out). Its function is as follows. Proton pump that utilizes the energy of pyrophosphate hydrolysis as the driving force for proton movement across the membrane. Generates a proton motive force. In Methanosarcina acetivorans (strain ATCC 35395 / DSM 2834 / JCM 12185 / C2A), this protein is K(+)-insensitive pyrophosphate-energized proton pump.